The following is a 317-amino-acid chain: Melanocyte-stimulating hormone receptor (317 aa).

Residues 1–37 (MPVQGSQRRLLGSLNSTPTATPKLGLAANQTGAQCLE) lie on the Extracellular side of the membrane. Residue N29 is glycosylated (N-linked (GlcNAc...) asparagine). Residues 38–63 (VSIPDGLFLSLGLVSLVENVLVVAAI) form a helical membrane-spanning segment. Residues 64 to 72 (ARNRNLHSP) lie on the Cytoplasmic side of the membrane. A helical membrane pass occupies residues 73 to 93 (MYCFICCLALSDLLVSGSNML). The Extracellular segment spans residues 94–118 (ETAVILLLEAGALAARAAVVQQLDN). Residues 119–140 (VIDVITCSSMLSSLCFLGAIAM) traverse the membrane as a helical segment. At 141–163 (DRYISIFYALRYHSIVTLPRARG) the chain is on the cytoplasmic side. A helical transmembrane segment spans residues 164 to 183 (VVAAIWVASILFSTLFIAYY). Residues 184–191 (DHVAVLLC) lie on the Extracellular side of the membrane. Residues 192–211 (LVVFFLAMLVLMAVLYVHML) form a helical membrane-spanning segment. At 212–240 (ARACQHAQGIAQLHKRQRPAHQGVGLKGA) the chain is on the cytoplasmic side. The helical transmembrane segment at 241–266 (ATLTILLGIFFLCWGPFFLHLTLIVL) threads the bilayer. Over 267-279 (CPQHPTCSCIFKN) the chain is Extracellular. The helical transmembrane segment at 280 to 300 (FNLFLALIICNAIIDPLIYAF) threads the bilayer. Over 301-317 (RSQELRRTLKKVLLCSW) the chain is Cytoplasmic. A lipid anchor (S-palmitoyl cysteine) is attached at C315.

This sequence belongs to the G-protein coupled receptor 1 family. As to quaternary structure, interacts with MGRN1, but does not undergo MGRN1-mediated ubiquitination; this interaction competes with GNAS-binding and thus inhibits agonist-induced cAMP production. Interacts with OPN3; the interaction results in a decrease in MC1R-mediated cAMP signaling and ultimately a decrease in melanin production in melanocytes.

The protein resides in the cell membrane. Its function is as follows. Receptor for MSH (alpha, beta and gamma) and ACTH. The activity of this receptor is mediated by G proteins which activate adenylate cyclase. Mediates melanogenesis, the production of eumelanin (black/brown) and phaeomelanin (red/yellow), via regulation of cAMP signaling in melanocytes. In Presbytis comata (Grizzled leaf monkey), this protein is Melanocyte-stimulating hormone receptor (MC1R).